The following is a 1453-amino-acid chain: NRPS-like tryptophan epimerase fscC (1453 aa).

The adenylation stretch occupies residues 37–433; the sequence is SYGELSAMSS…ATHLIRNCVV (397 aa). A Carrier domain is found at 544–626; the sequence is TGSRQSTRHK…LFHTSKSRFT (83 aa). Serine 586 carries the O-(pantetheine 4'-phosphoryl)serine modification. The interval 639–1053 is epimerization (E) domain; that stretch reads FPLSPVQRFF…KDVLESAGVF (415 aa). The segment at 1181 to 1391 is condensation; sequence FFGLQSNERA…AGSSLHQHNQ (211 aa).

This sequence belongs to the NRP synthetase family. Requires pantetheine 4'-phosphate as cofactor.

Its pathway is secondary metabolite biosynthesis. NRPS-like tryptophan epimerase; part of the fragmented gene cluster that mediates the biosynthesis of fusarochromene, a tryptophan-derived metabolite closely related to a group of mycotoxins including fusarochromanone. Within the pathway, fscC catalyzes the first step via epimerization of L-tryptophan to provide the intermediate D-tryptophan. D-tryptophan is subsequently hydroxylated by the tryptophan 6-hydroxylase fscE to yield 6-hydroxytryptophan. The pyrrole ring undergoes cleavaged by the tryptophan 2,3-dioxygenase fscD and is finally converted to 4-hydroxykyrunenine by the hydrolase fscH. The NRPS-like oxidoreductase fscA reduces the carboxyl group to primary alcohol and the DMATS-type prenyltransferase fscG performs prenylation, followed by the formation of a chromene ring catalyzed by the oxidoreductase fscI, which leads to desacetylfusarochromene. Epoxidation by fscF and rearrangement reactions of chromene double bonds convert compound desacetylfusarochromene to fusarochromanones. Although specific acetyltransferases were not found near the fsc gene cluster, several predicted enzymes containing the N-acetyltransferase superfamily domain are present in the genome of F.equiseti. These predicted enzymes may have the potential to convert desacetylfusarochromene to fusarochromene. In Fusarium equiseti (Fusarium scirpi), this protein is NRPS-like tryptophan epimerase fscC.